The chain runs to 240 residues: 1-(5-phosphoribosyl)-5-[(5-phosphoribosylamino)methylideneamino] imidazole-4-carboxamide isomerase (240 aa).

The active-site Proton acceptor is the Asp9. The active-site Proton donor is the Asp131.

It belongs to the HisA/HisF family.

It localises to the cytoplasm. It carries out the reaction 1-(5-phospho-beta-D-ribosyl)-5-[(5-phospho-beta-D-ribosylamino)methylideneamino]imidazole-4-carboxamide = 5-[(5-phospho-1-deoxy-D-ribulos-1-ylimino)methylamino]-1-(5-phospho-beta-D-ribosyl)imidazole-4-carboxamide. It participates in amino-acid biosynthesis; L-histidine biosynthesis; L-histidine from 5-phospho-alpha-D-ribose 1-diphosphate: step 4/9. This chain is 1-(5-phosphoribosyl)-5-[(5-phosphoribosylamino)methylideneamino] imidazole-4-carboxamide isomerase, found in Azobacteroides pseudotrichonymphae genomovar. CFP2.